Reading from the N-terminus, the 2345-residue chain is Nonribisomal peptide synthetase malG (2345 aa).

Residues F226 to V620 form an adenylation 1 region. Positions T766 to G839 constitute a Carrier 1 domain. S800 carries the post-translational modification O-(pantetheine 4'-phosphoryl)serine. Residues E877 to L1292 are condensation 1. An adenylation 2 region spans residues V1317–R1707. Positions Q1843–K1926 constitute a Carrier 2 domain. Position 1885 is an O-(pantetheine 4'-phosphoryl)serine (S1885). The segment at G1969–E2256 is reductase (R) domain.

It belongs to the NRP synthetase family.

The enzyme catalyses L-proline + L-tryptophan + 2 ATP + NADPH = (S)-3-(indol-3-ylmethyl)-6,7,8,8a-tetrahydropyrrolo[1,2-a]pyrazin-1-one + 2 AMP + 2 diphosphate + NADP(+) + H2O + H(+). Functionally, nonribisomal peptide synthetase; part of the gene cluster that mediates the biosynthesis of malbrancheamide, a dichlorinated fungal indole alkaloid that belongs to a family of natural products containing a characteristic bicyclo[2.2.2]diazaoctane core. The first step of malbrancheamide biosynthesis involves coupling of L-proline and L-tryptophan by malG, a bimodular NRPS, to produce L-Pro-L-Trp aldehyde through reductive offloading. This compound undergoes spontaneous cyclization and dehydration to give a dienamine which is reverse prenylated at C-2 by malE. The other prenyltransferase present in the cluster, malB, displays modest activity, suggesting that may be a redundant gene in the pathway. Subsequently, a [4+2] Diels-Alder cyclo-addition catalyzed by the bifunctional enzyme malC forms the characteristic bicyclo[2.2.2]diazaoctane ring of premalbrancheamid. Finally, the flavin-dependent halogenase malA catalyzes the iterative dichlorination of the indole ring of premalbrancheamide to yield C-9 monochlorinated malbrancheamide B, C-8 monochlorinated isomalbrancheamide B, and dichlorinated malbrancheamide. MalA is also able to brominate premalbrancheamide at C-9 to yield malbrancheamide C, and, to a lesser extend, at C-8 to yield isomalbrancheamide C. Finally, malA can brominate C-9 monochlorinated malbrancheamide B at C-8 to yield malbrancheamide D, or C-8 monochlorinated isomalbrancheamide B at C-9 to produce isomalbrancheamide D. The polypeptide is Nonribisomal peptide synthetase malG (Malbranchea aurantiaca).